We begin with the raw amino-acid sequence, 444 residues long: Argininosuccinate synthase (444 aa).

Residues 18–26 (AFSGGLDTS) and Ala-44 each bind ATP. An L-citrulline-binding site is contributed by Tyr-100. Residues Gly-130 and Thr-132 each contribute to the ATP site. Residues Thr-132, Asn-136, and Asp-137 each contribute to the L-aspartate site. Residue Asn-136 coordinates L-citrulline. Residue Asp-137 participates in ATP binding. Residues Arg-140 and Ser-193 each coordinate L-citrulline. Asp-195 contacts ATP. 3 residues coordinate L-citrulline: Thr-202, Glu-204, and Glu-281.

The protein belongs to the argininosuccinate synthase family. Type 2 subfamily. As to quaternary structure, homotetramer.

The protein resides in the cytoplasm. The enzyme catalyses L-citrulline + L-aspartate + ATP = 2-(N(omega)-L-arginino)succinate + AMP + diphosphate + H(+). Its pathway is amino-acid biosynthesis; L-arginine biosynthesis; L-arginine from L-ornithine and carbamoyl phosphate: step 2/3. The protein is Argininosuccinate synthase of Haemophilus influenzae (strain PittGG).